A 183-amino-acid chain; its full sequence is Transcription factor 15 (183 aa).

Residues 24–46 are disordered; sequence DEENRSESDTSDQSYGCCEGAEA. The bHLH domain occupies 61–113; the sequence is KQRQAANARERDRTQSVNTAFTALRTLIPTEPVDRKLSKIETLRLASSYIAHL.

In terms of assembly, heterodimer; efficient DNA binding requires dimerization with another bHLH protein.

The protein localises to the nucleus. Early transcription factor that plays a key role in somitogenesis, paraxial mesoderm development and regulation of stem cell pluripotency. Essential for the mesenchymal to epithelial transition associated with somite formation. Required for somite morphogenesis, thereby regulating patterning of the axial skeleton and skeletal muscles. Also plays a key role in regulation of stem cell pluripotency. Promotes pluripotency exit of embryonic stem cells (ESCs) by priming ESCs for differentiation. Acts as a key regulator of self-renewal of hematopoietic stem cells (HSCs) by mediating HSCs quiescence and long-term self-renewal. Acts by forming a heterodimer with another helix-loop-helix (bHLH) protein, that binds DNA on E-box motifs (5'-CANNTG-3') and activates transcription of target genes. The polypeptide is Transcription factor 15 (TCF15) (Gallus gallus (Chicken)).